The sequence spans 622 residues: V-type ATP synthase subunit I 1 (622 aa).

8 helical membrane passes run 306–326 (WVNL…YWEV), 328–348 (ISGF…ADAG), 373–393 (PAWC…ALVC), 428–448 (QMHV…LIVV), 459–479 (AEFG…NLIV), 485–505 (PLTG…FIFV), 532–552 (VFAD…GGAI), and 562–582 (PLFA…GHGL).

Belongs to the V-ATPase 116 kDa subunit family.

It localises to the cell membrane. Its function is as follows. Produces ATP from ADP in the presence of a proton gradient across the membrane. In Treponema pallidum (strain Nichols), this protein is V-type ATP synthase subunit I 1 (atpI1).